The primary structure comprises 456 residues: Argininosuccinate lyase (456 aa).

The protein belongs to the lyase 1 family. Argininosuccinate lyase subfamily.

It is found in the cytoplasm. The enzyme catalyses 2-(N(omega)-L-arginino)succinate = fumarate + L-arginine. The protein operates within amino-acid biosynthesis; L-arginine biosynthesis; L-arginine from L-ornithine and carbamoyl phosphate: step 3/3. This Shewanella amazonensis (strain ATCC BAA-1098 / SB2B) protein is Argininosuccinate lyase.